The chain runs to 186 residues: Ribosome-recycling factor (186 aa).

This sequence belongs to the RRF family.

The protein localises to the cytoplasm. Functionally, responsible for the release of ribosomes from messenger RNA at the termination of protein biosynthesis. May increase the efficiency of translation by recycling ribosomes from one round of translation to another. This Burkholderia ambifaria (strain ATCC BAA-244 / DSM 16087 / CCUG 44356 / LMG 19182 / AMMD) (Burkholderia cepacia (strain AMMD)) protein is Ribosome-recycling factor.